We begin with the raw amino-acid sequence, 244 residues long: Small ribosomal subunit protein eS6 (244 aa).

A disordered region spans residues 185–244 (RLQRKRHMRAVKRRRYAKQREEEATYAKLLAKRKKEEREAHAKRRSSARESSLRESKSKA). The span at 186–201 (LQRKRHMRAVKRRRYA) shows a compositional bias: basic residues. A compositionally biased stretch (basic and acidic residues) spans 231–244 (SARESSLRESKSKA).

It belongs to the eukaryotic ribosomal protein eS6 family. Ribosomal protein S6 is the major substrate of protein kinases in eukaryote ribosomes.

Functionally, component of the 40S small ribosomal subunit. Plays an important role in controlling cell growth and proliferation through the selective translation of particular classes of mRNA. The chain is Small ribosomal subunit protein eS6 (RPS6) from Branchiostoma floridae (Florida lancelet).